The sequence spans 106 residues: U1-lycotoxin-Ls1b (106 aa).

A signal peptide spans 1–19 (MKVLVVVALLVTLISYSSS). Residues 20–40 (EGIDDPEADELLSLMANEQTR) constitute a propeptide that is removed on maturation. 4 cysteine pairs are disulfide-bonded: cysteine 43/cysteine 58, cysteine 50/cysteine 67, cysteine 57/cysteine 85, and cysteine 69/cysteine 83.

The protein belongs to the neurotoxin 19 (CSTX) family. 04 (U1-Lctx) subfamily. As to expression, expressed by the venom gland.

Its subcellular location is the secreted. This chain is U1-lycotoxin-Ls1b, found in Lycosa singoriensis (Wolf spider).